The following is a 261-amino-acid chain: Zaragozic acid A biosynthesis cluster protein 8 (261 aa).

The span at 242–254 (GTRSHTPAATQRR) shows a compositional bias: polar residues. Residues 242-261 (GTRSHTPAATQRRGQGRGCG) form a disordered region.

The protein operates within secondary metabolite biosynthesis. Its function is as follows. Part of the gene cluster that mediates the biosynthesis of squalestatin S1 (SQS1, also known as zaragozic acid A), a heavily oxidized fungal polyketide that offers potent cholesterol lowering activity by targeting squalene synthase (SS). SQS1 is composed of a 2,8-dioxobicyclic[3.2.1]octane-3,4,5-tricarboxyclic acid core that is connected to two lipophilic polyketide arms. These initial steps feature the priming of an unusual benzoic acid starter unit onto the highly reducing polyketide synthase clz14, followed by oxaloacetate extension and product release to generate a tricarboxylic acid containing product. The phenylalanine ammonia lyase (PAL) clz10 and the acyl-CoA ligase clz12 are involved in transforming phenylalanine into benzoyl-CoA. The citrate synthase-like protein clz17 is involved in connecting the C-alpha-carbons of the hexaketide chain and oxaloacetate to afford the tricarboxylic acid unit. The potential hydrolytic enzymes, clz11 and clz13, are in close proximity to pks2 and may participate in product release. On the other side, the tetraketide arm is synthesized by a the squalestatin tetraketide synthase clz2 and enzymatically esterified to the core in the last biosynthetic step, by the acetyltransferase clz6. The biosynthesis of the tetraketide must involve 3 rounds of chain extension. After the first and second rounds methyl-transfer occurs, and in all rounds of extension the ketoreductase and dehydratase are active. The enoyl reductase and C-MeT of clz2 are not active in the final round of extension. The acetyltransferase clz6 appears to have a broad substrate selectivity for its acyl CoA substrate, allowing the in vitro synthesis of novel squalestatins. The biosynthesis of SQS1 requires several oxidative steps likely performed by oxidoreductases clz3, clz15 and clz16. Finally, in support of the identification of the cluster as being responsible for SQS1 production, the cluster contains a gene encoding a putative squalene synthase (SS) clz20, suggesting a likely mechanism for self-resistance. The protein is Zaragozic acid A biosynthesis cluster protein 8 of Cochliobolus lunatus (Filamentous fungus).